Here is a 385-residue protein sequence, read N- to C-terminus: Mannitol-1-phosphate 5-dehydrogenase (385 aa).

NAD(+) is bound at residue A3–G14.

Belongs to the mannitol dehydrogenase family.

The enzyme catalyses D-mannitol 1-phosphate + NAD(+) = beta-D-fructose 6-phosphate + NADH + H(+). The sequence is that of Mannitol-1-phosphate 5-dehydrogenase from Buchnera aphidicola subsp. Acyrthosiphon pisum (strain Tuc7).